Reading from the N-terminus, the 470-residue chain is 3-isopropylmalate dehydratase large subunit (470 aa).

The interval 50 to 121 is disordered; it reads NVARGCQHRH…PCGRPGAGRH (72 aa). Residues cysteine 349, cysteine 409, and cysteine 412 each coordinate [4Fe-4S] cluster.

The protein belongs to the aconitase/IPM isomerase family. LeuC type 1 subfamily. As to quaternary structure, heterodimer of LeuC and LeuD. [4Fe-4S] cluster serves as cofactor.

The enzyme catalyses (2R,3S)-3-isopropylmalate = (2S)-2-isopropylmalate. It participates in amino-acid biosynthesis; L-leucine biosynthesis; L-leucine from 3-methyl-2-oxobutanoate: step 2/4. Catalyzes the isomerization between 2-isopropylmalate and 3-isopropylmalate, via the formation of 2-isopropylmaleate. The sequence is that of 3-isopropylmalate dehydratase large subunit from Azotobacter vinelandii.